The primary structure comprises 190 residues: Large ribosomal subunit protein uL5 (190 aa).

Belongs to the universal ribosomal protein uL5 family. In terms of assembly, part of the 50S ribosomal subunit; part of the 5S rRNA/L5/L18/L25 subcomplex. Contacts the 5S rRNA and the P site tRNA. Forms a bridge to the 30S subunit in the 70S ribosome.

Its function is as follows. This is one of the proteins that bind and probably mediate the attachment of the 5S RNA into the large ribosomal subunit, where it forms part of the central protuberance. In the 70S ribosome it contacts protein S13 of the 30S subunit (bridge B1b), connecting the 2 subunits; this bridge is implicated in subunit movement. Contacts the P site tRNA; the 5S rRNA and some of its associated proteins might help stabilize positioning of ribosome-bound tRNAs. In Bifidobacterium longum (strain DJO10A), this protein is Large ribosomal subunit protein uL5.